The primary structure comprises 309 residues: Aspartate carbamoyltransferase catalytic subunit (309 aa).

Carbamoyl phosphate-binding residues include Arg-55 and Thr-56. Residue Lys-85 participates in L-aspartate binding. Positions 106, 135, and 138 each coordinate carbamoyl phosphate. L-aspartate-binding residues include Arg-168 and Arg-230. Carbamoyl phosphate contacts are provided by Leu-268 and Pro-269.

The protein belongs to the aspartate/ornithine carbamoyltransferase superfamily. ATCase family. In terms of assembly, heterododecamer (2C3:3R2) of six catalytic PyrB chains organized as two trimers (C3), and six regulatory PyrI chains organized as three dimers (R2).

It catalyses the reaction carbamoyl phosphate + L-aspartate = N-carbamoyl-L-aspartate + phosphate + H(+). It participates in pyrimidine metabolism; UMP biosynthesis via de novo pathway; (S)-dihydroorotate from bicarbonate: step 2/3. Catalyzes the condensation of carbamoyl phosphate and aspartate to form carbamoyl aspartate and inorganic phosphate, the committed step in the de novo pyrimidine nucleotide biosynthesis pathway. The polypeptide is Aspartate carbamoyltransferase catalytic subunit (Wigglesworthia glossinidia brevipalpis).